A 354-amino-acid polypeptide reads, in one-letter code: Uroporphyrinogen decarboxylase (354 aa).

Residues Arg30–Arg34, Asp79, Tyr154, Ser209, and His333 each bind substrate.

The protein belongs to the uroporphyrinogen decarboxylase family. In terms of assembly, homodimer.

Its subcellular location is the cytoplasm. The enzyme catalyses uroporphyrinogen III + 4 H(+) = coproporphyrinogen III + 4 CO2. It functions in the pathway porphyrin-containing compound metabolism; protoporphyrin-IX biosynthesis; coproporphyrinogen-III from 5-aminolevulinate: step 4/4. Functionally, catalyzes the decarboxylation of four acetate groups of uroporphyrinogen-III to yield coproporphyrinogen-III. This Mycolicibacterium gilvum (strain PYR-GCK) (Mycobacterium gilvum (strain PYR-GCK)) protein is Uroporphyrinogen decarboxylase.